Reading from the N-terminus, the 137-residue chain is Interferon-induced transmembrane protein 3 (137 aa).

Residues 1-57 are Cytoplasmic-facing; it reads MNHTSQAFITAASGGQPPNYERIKEEYEVAEMGAPHGSASVRTTVINMPREVSVPDH. Y20 carries the post-translational modification Phosphotyrosine. K24 participates in a covalent cross-link: Glycyl lysine isopeptide (Lys-Gly) (interchain with G-Cter in ubiquitin). The residue at position 27 (Y27) is a Phosphotyrosine. Residues 58-78 constitute an intramembrane region (helical); sequence VVWSLFNTLFMNFCCLGFIAY. Residues 60-93 are interaction with SPP1; it reads WSLFNTLFMNFCCLGFIAYAYSVKSRDRKMVGDV. 2 S-palmitoyl cysteine lipidation sites follow: C71 and C72. Residues 79-109 are Cytoplasmic-facing; it reads AYSVKSRDRKMVGDVTGAQAYASTAKCLNIS. Residues K83, K88, and K104 each participate in a glycyl lysine isopeptide (Lys-Gly) (interchain with G-Cter in ubiquitin) cross-link. C105 carries the S-palmitoyl cysteine lipid modification. Positions 108–133 are interaction with VAPA; the sequence is ISTLVLSILMVVITIVSVIIIVLNAQ. A helical transmembrane segment spans residues 110–130; that stretch reads TLVLSILMVVITIVSVIIIVL. The Extracellular portion of the chain corresponds to 131 to 137; sequence NAQNLHT.

It belongs to the CD225/Dispanin family. As to quaternary structure, interacts with ATP6V0B. Interacts with CD81. Interacts with SPP1; the interaction reduces OPN expression. Interacts with BRI3. Post-translationally, polyubiquitinated with both 'Lys-48' and 'Lys-63' linkages. Ubiquitination negatively regulates antiviral activity. Lys-24 is the most prevalent ubiquitination site. In terms of processing, phosphorylation at Tyr-20 is required for endosomal and lysosomal location. Expressed in acinar cell. Predominantly expressed in nascent primordial germ cells, as well as in gonadal germ cells.

Its subcellular location is the cell membrane. It is found in the late endosome membrane. The protein localises to the early endosome membrane. It localises to the lysosome membrane. The protein resides in the cytoplasm. Its subcellular location is the perinuclear region. Functionally, IFN-induced antiviral protein which disrupts intracellular cholesterol homeostasis. Inhibits the entry of viruses to the host cell cytoplasm by preventing viral fusion with cholesterol depleted endosomes. May inactivate new enveloped viruses which buds out of the infected cell, by letting them go out with a cholesterol depleted membrane. Active against multiple viruses, including influenza A virus, SARS coronaviruses (SARS-CoV and SARS-CoV-2), Marburg virus (MARV), Ebola virus (EBOV), Dengue virus (DNV), West Nile virus (WNV), human immunodeficiency virus type 1 (HIV-1), hepatitis C virus (HCV) and vesicular stomatitis virus (VSV). Can inhibit: influenza virus hemagglutinin protein-mediated viral entry, MARV and EBOV GP1,2-mediated viral entry, SARS-CoV and SARS-CoV-2 S protein-mediated viral entry and VSV G protein-mediated viral entry. Plays a critical role in the structural stability and function of vacuolar ATPase (v-ATPase). Establishes physical contact with the v-ATPase of endosomes which is critical for proper clathrin localization and is also required for the function of the v-ATPase to lower the pH in phagocytic endosomes thus establishing an antiviral state. In hepatocytes, IFITM proteins act in a coordinated manner to restrict HCV infection by targeting the endocytosed HCV virion for lysosomal degradation. IFITM2 and IFITM3 display anti-HCV activity that may complement the anti-HCV activity of IFITM1 by inhibiting the late stages of HCV entry, possibly in a coordinated manner by trapping the virion in the endosomal pathway and targeting it for degradation at the lysosome. Exerts opposing activities on SARS-CoV-2, including amphipathicity-dependent restriction of virus at endosomes and amphipathicity-independent enhancement of infection at the plasma membrane. This chain is Interferon-induced transmembrane protein 3, found in Mus musculus (Mouse).